A 153-amino-acid polypeptide reads, in one-letter code: Large ribosomal subunit protein bL27m (153 aa).

The N-terminal 37 residues, methionine 1–serine 37, are a transit peptide targeting the mitochondrion. Residues isoleucine 34–glycine 57 are disordered.

This sequence belongs to the bacterial ribosomal protein bL27 family. As to quaternary structure, component of the mitochondrial large ribosomal subunit (mt-LSU). Mature yeast 74S mitochondrial ribosomes consist of a small (37S) and a large (54S) subunit. The 37S small subunit contains a 15S ribosomal RNA (15S mt-rRNA) and at least 32 different proteins. The 54S large subunit contains a 21S rRNA (21S mt-rRNA) and at least 45 different proteins.

Its subcellular location is the mitochondrion. Its function is as follows. Component of the mitochondrial ribosome (mitoribosome), a dedicated translation machinery responsible for the synthesis of mitochondrial genome-encoded proteins, including at least some of the essential transmembrane subunits of the mitochondrial respiratory chain. The mitoribosomes are attached to the mitochondrial inner membrane and translation products are cotranslationally integrated into the membrane. This is Large ribosomal subunit protein bL27m (mrp7) from Schizosaccharomyces pombe (strain 972 / ATCC 24843) (Fission yeast).